A 234-amino-acid chain; its full sequence is Sugar fermentation stimulation protein homolog (234 aa).

The protein belongs to the SfsA family.

The chain is Sugar fermentation stimulation protein homolog from Enterobacter sp. (strain 638).